The chain runs to 303 residues: Glycine--tRNA ligase alpha subunit (303 aa).

It belongs to the class-II aminoacyl-tRNA synthetase family. In terms of assembly, tetramer of two alpha and two beta subunits.

The protein localises to the cytoplasm. It catalyses the reaction tRNA(Gly) + glycine + ATP = glycyl-tRNA(Gly) + AMP + diphosphate. The polypeptide is Glycine--tRNA ligase alpha subunit (Klebsiella pneumoniae subsp. pneumoniae (strain ATCC 700721 / MGH 78578)).